We begin with the raw amino-acid sequence, 172 residues long: Translation initiation factor IF-3 (172 aa).

Belongs to the IF-3 family. As to quaternary structure, monomer.

The protein localises to the cytoplasm. IF-3 binds to the 30S ribosomal subunit and shifts the equilibrium between 70S ribosomes and their 50S and 30S subunits in favor of the free subunits, thus enhancing the availability of 30S subunits on which protein synthesis initiation begins. The polypeptide is Translation initiation factor IF-3 (Lactobacillus johnsonii (strain CNCM I-12250 / La1 / NCC 533)).